The sequence spans 249 residues: Isoamyl acetate-hydrolyzing esterase 1 homolog (249 aa).

The active-site Nucleophile is the S24. At K63 the chain carries N6-succinyllysine. The active-site Proton donor is D197. The active-site Proton acceptor is H200.

The protein belongs to the 'GDSL' lipolytic enzyme family. IAH1 subfamily.

Probable lipase. This chain is Isoamyl acetate-hydrolyzing esterase 1 homolog (Iah1), found in Mus musculus (Mouse).